The chain runs to 248 residues: MAGHSQFKNIMHRKGRQDAVRSKVFSKLAREITVAAKQGSPDPAMNPRLRLAVQNAKSQSMPKDNIERAIKKASGGDVENYDEVRYEGYGPGGVAIIVEALTDNRNRTASNVRAAFTKAGGALGETGSVGFMFNRIGEIIYKPEAGTAESVMEAAIEAGAEDVQSEETGHHITCAFEDIGEVSKMLEATLGEAESIKTIWKPTTLAPVDEEKAMSILRLISTLEEDDDVQNVYANFDVSDEVLAALSA.

The protein belongs to the TACO1 family.

Its subcellular location is the cytoplasm. This is Probable transcriptional regulatory protein BARBAKC583_0163 from Bartonella bacilliformis (strain ATCC 35685 / KC583 / Herrer 020/F12,63).